A 465-amino-acid chain; its full sequence is Serine/threonine-protein kinase 38 (465 aa).

Alanine 2 carries the N-acetylalanine modification. The tract at residues 62-87 (KRLRRSAHARKETEFLRLKRTRLGLE) is interaction with S100B. Threonine 74 carries the post-translational modification Phosphothreonine. Residues 89-382 (FESLKVIGRG…VEEIKNNLFF (294 aa)) enclose the Protein kinase domain. Residues 95–103 (IGRGAFGEV) and lysine 118 each bind ATP. Aspartate 212 (proton acceptor) is an active-site residue. Serine 264 is modified (phosphoserine). Position 281 is a phosphoserine; by autocatalysis (serine 281). The UFM1-interacting motif (UFIM) motif lies at 306–311 (WSLGVI). One can recognise an AGC-kinase C-terminal domain in the interval 383 to 455 (EGVDWEHIRE…KRFEGLTARG (73 aa)). A Phosphothreonine; by STK24/MST3 modification is found at threonine 444.

Belongs to the protein kinase superfamily. AGC Ser/Thr protein kinase family. As to quaternary structure, homodimeric S100B binds two molecules of STK38. Interacts with MOB1 and MOB2. Interacts with MAP3K1 and MAP3K2 (via the kinase catalytic domain). Forms a tripartite complex with MOBKL1B and STK3/MST2. Interacts with MICAL1; leading to inhibit the protein kinase activity by antagonizing activation by MST1/STK4. Requires Mg(2+) as cofactor. Post-translationally, ISGylated. Phosphorylated by STK3/MST2 and this is enhanced by MOBKL1B. In terms of tissue distribution, expressed at high levels in spleen, lung, thymus, brain and fat tissue.

It localises to the nucleus. It is found in the cytoplasm. The protein localises to the chromosome. It carries out the reaction L-seryl-[protein] + ATP = O-phospho-L-seryl-[protein] + ADP + H(+). The catalysed reaction is L-threonyl-[protein] + ATP = O-phospho-L-threonyl-[protein] + ADP + H(+). With respect to regulation, activated by binding of S100B which releases autoinhibitory N-lobe interactions, enabling ATP to bind and the autophosphorylation of Ser-281. Thr-444 then undergoes calcium-dependent phosphorylation by STK24/MST3. Interactions between phosphorylated Thr-444 and the N-lobe promote additional structural changes that complete the activation of the kinase. Autoinhibition is also released by the binding of MOB1/MOBKL1A and MOB2/HCCA2 to the N-terminal of STK38. Serine/threonine-protein kinase that acts as a negative regulator of MAP3K1/2 signaling. Converts MAP3K2 from its phosphorylated form to its non-phosphorylated form and inhibits autophosphorylation of MAP3K2. Acts as an ufmylation 'reader' in a kinase-independent manner: specifically recognizes and binds mono-ufmylated histone H4 in response to DNA damage, promoting the recruitment of SUV39H1 to the double-strand breaks, resulting in ATM activation. The protein is Serine/threonine-protein kinase 38 of Mus musculus (Mouse).